The chain runs to 194 residues: Exopolysaccharide II synthesis transcriptional activator ExpG (194 aa).

One can recognise an HTH marR-type domain in the interval 49-184 (YFELARVMER…AFQTLHRLEL (136 aa)).

Functionally, transcriptional activator of genes for galactoglucan synthesis (exopolysaccharide II or EPS II). This Rhizobium meliloti (strain 1021) (Ensifer meliloti) protein is Exopolysaccharide II synthesis transcriptional activator ExpG (expG).